Reading from the N-terminus, the 85-residue chain is Large ribosomal subunit protein bL27 (85 aa).

The interval M1–L21 is disordered.

Belongs to the bacterial ribosomal protein bL27 family.

In Geotalea uraniireducens (strain Rf4) (Geobacter uraniireducens), this protein is Large ribosomal subunit protein bL27.